A 548-amino-acid chain; its full sequence is MIINKFSLKWMLAIAVAIPAIALLFVAFTSLNTMSVMQAQSNSLYANTAAPMRAMAEATSRIPRMRVGIDMMLLQETALKDAKGVLKRVEEARTEDIPEMRQAMQVAVDSQVNPELKEQARKLQARFEQMVREELEPMLQAFANNDMTTAQNIYRDKYAPTYGEMRKQANQILDTLLQQAEQQNHASVESFEAGRTKQMVIIAAGLIISFITSLVIITNLRSRVAYLKDRMSSAAANLSLRTRLELDGNDELCDIGKSFNAFIDKVHHSIEEVAENSKELATMASSVSQRAHMTQSNCASQRDRTVQVATAIHELGATVSEIASNAAMAADVAKQATLHSGEGKKVVGEVQNRIQTLVNELDNATQVVSSLATQINGISSTLDTIRSISEQTNLLALNAAIEAARAGEQGRGFAVVADEVRTLASRSAASTEEIQQVINRLQTESTRAVEAMEKGRSQSDVVVEFSAKANQSLTEINSQIDQINDQNIQVATATEEQSTVVEDINRNVEDINQLTTETSHVADELSRASASLQRLSSQLDKLVGSFEL.

At 1 to 10 (MIINKFSLKW) the chain is on the cytoplasmic side. The helical transmembrane segment at 11–31 (MLAIAVAIPAIALLFVAFTSL) threads the bilayer. The Periplasmic segment spans residues 32–199 (NTMSVMQAQS…SFEAGRTKQM (168 aa)). Residues 200-220 (VIIAAGLIISFITSLVIITNL) traverse the membrane as a helical segment. The region spanning 218 to 271 (TNLRSRVAYLKDRMSSAAANLSLRTRLELDGNDELCDIGKSFNAFIDKVHHSIE) is the HAMP domain. The Cytoplasmic segment spans residues 221 to 548 (RSRVAYLKDR…LDKLVGSFEL (328 aa)). The Methyl-accepting transducer domain occupies 276–512 (NSKELATMAS…DINRNVEDIN (237 aa)).

It belongs to the methyl-accepting chemotaxis (MCP) protein family.

The protein resides in the cell inner membrane. Its function is as follows. Chemotactic-signal transducers respond to changes in the concentration of attractants and repellents in the environment, transduce a signal from the outside to the inside of the cell, and facilitate sensory adaptation through the variation of the level of methylation. The chain is Methyl-accepting chemotaxis protein HlyB (hlyB) from Vibrio cholerae serotype O1 (strain ATCC 39315 / El Tor Inaba N16961).